The primary structure comprises 809 residues: RNA-directed RNA polymerase (809 aa).

Forms a ribonucleoprotein complex with the viral RNA. Since the viral RNA is not encapsidated, ribonucleoprotein complex formation appears to be the strategy to survive in the host as persistent virus.

The protein localises to the host mitochondrion. The catalysed reaction is RNA(n) + a ribonucleoside 5'-triphosphate = RNA(n+1) + diphosphate. In terms of biological role, RNA-directed RNA polymerase that replicates the viral (+) and (-) genome. The chain is RNA-directed RNA polymerase from Cryphonectria parasitica mitovirus 1 (strain American chestnut tree/New Jersey/NB631) (CMV1).